We begin with the raw amino-acid sequence, 490 residues long: Betaine aldehyde dehydrogenase (490 aa).

Residue aspartate 93 coordinates K(+). 150–152 contributes to the NAD(+) binding site; that stretch reads GAW. The Charge relay system role is filled by lysine 162. Position 176-179 (176-179) interacts with NAD(+); that stretch reads KPSE. Valine 180 provides a ligand contact to K(+). 230–233 contacts NAD(+); that stretch reads GIAS. A K(+)-binding site is contributed by leucine 246. Glutamate 252 functions as the Proton acceptor in the catalytic mechanism. Glycine 254, cysteine 286, and glutamate 387 together coordinate NAD(+). The active-site Nucleophile is cysteine 286. Cysteine 286 bears the Cysteine sulfenic acid (-SOH) mark. Lysine 457 and glycine 460 together coordinate K(+). The Charge relay system role is filled by glutamate 464.

The protein belongs to the aldehyde dehydrogenase family. In terms of assembly, dimer of dimers. The cofactor is K(+).

It catalyses the reaction betaine aldehyde + NAD(+) + H2O = glycine betaine + NADH + 2 H(+). The protein operates within amine and polyamine biosynthesis; betaine biosynthesis via choline pathway; betaine from betaine aldehyde: step 1/1. Functionally, involved in the biosynthesis of the osmoprotectant glycine betaine. Catalyzes the irreversible oxidation of betaine aldehyde to the corresponding acid. This Pectobacterium atrosepticum (strain SCRI 1043 / ATCC BAA-672) (Erwinia carotovora subsp. atroseptica) protein is Betaine aldehyde dehydrogenase.